The primary structure comprises 310 residues: Mas-related G-protein coupled receptor member E (310 aa).

Over 1–22 (MTSLSVHTDSPSTQGEMAFNLT) the chain is Extracellular. Asn-20 carries an N-linked (GlcNAc...) asparagine glycan. A helical membrane pass occupies residues 23 to 43 (ILSLTELLSLGGLLGNGVALW). The Cytoplasmic portion of the chain corresponds to 44–60 (LLNQNVYRNPFSIYLLD). The helical transmembrane segment at 61-81 (VACADLIFLCCHMVAIIPELL) threads the bilayer. At 82–92 (QDQLNFPEFVH) the chain is on the extracellular side. Residues 93–113 (ISLTMLRFFCYIVGLSLLAAI) form a helical membrane-spanning segment. The Cytoplasmic segment spans residues 114 to 133 (STEQCLATLFPAWYLCRRPR). The chain crosses the membrane as a helical span at residues 134 to 154 (YLTTCVCALIWVLCLLLDLLL). Residues 155-174 (SGACTQFFGAPSYHLCDMLW) lie on the Extracellular side of the membrane. Residues 175 to 195 (LVVAVLLAALCCTMCVTSLLL) form a helical membrane-spanning segment. The Cytoplasmic portion of the chain corresponds to 196–213 (LLRVERGPERHQPRGFPT). The chain crosses the membrane as a helical span at residues 214–234 (LVLLAVLLFLFCGLPFGIFWL). Over 235 to 248 (SKNLSWHIPLYFYH) the chain is Extracellular. N-linked (GlcNAc...) asparagine glycosylation is present at Asn-237. Residues 249-269 (FSFFMASVHSAAKPAIYFFLG) form a helical membrane-spanning segment. Over 270–310 (STPGQRFREPLRLVLQRALGDEAELGAGREASQGGLVDMTV) the chain is Cytoplasmic.

Belongs to the G-protein coupled receptor 1 family. Mas subfamily.

Its subcellular location is the cell membrane. Functionally, orphan receptor. May regulate nociceptor function and/or development, including the sensation or modulation of pain. The protein is Mas-related G-protein coupled receptor member E (Mrgpre) of Mus musculus (Mouse).